The primary structure comprises 514 residues: Threonine synthase (514 aa).

At K117 the chain carries N6-(pyridoxal phosphate)lysine. Residues G270, N271, F272, and D274 each coordinate pyridoxal 5'-phosphate. S319 and S321 each carry phosphoserine. T449 serves as a coordination point for pyridoxal 5'-phosphate.

This sequence belongs to the threonine synthase family. Requires pyridoxal 5'-phosphate as cofactor.

It catalyses the reaction O-phospho-L-homoserine + H2O = L-threonine + phosphate. Its pathway is amino-acid biosynthesis; L-threonine biosynthesis; L-threonine from L-aspartate: step 5/5. Catalyzes the gamma-elimination of phosphate from L-phosphohomoserine and the beta-addition of water to produce L-threonine. The sequence is that of Threonine synthase (thrc) from Schizosaccharomyces pombe (strain 972 / ATCC 24843) (Fission yeast).